A 369-amino-acid polypeptide reads, in one-letter code: Putative agmatine deiminase (369 aa).

C355 serves as the catalytic Amidino-cysteine intermediate.

This sequence belongs to the agmatine deiminase family.

The enzyme catalyses agmatine + H2O = N-carbamoylputrescine + NH4(+). The chain is Putative agmatine deiminase from Marinomonas sp. (strain MWYL1).